Reading from the N-terminus, the 250-residue chain is MSKIKSIYGIHAVSGVLDAAPQRIVKLYVQENRDDQRLQSLVEKAKALGVKVILLSRTELNTLSNEKHQGIVADCEEVENLDESALLSLLKKRETPALLLILDGVKDPHNLGACLRSANAFGVRAVIAPKDRAVGVTPVVRKVACGAAEMTPFIRVTNLSRTIDWLQKEGVWIVGTAVEAETLIQEIDLTGDIAIVLGSEGAGLRRLTKERCDFLAQIPLRGSVESLNVSVACGICLYEVQRQREAPAPS.

Residues Gly198, Ile218, and Leu227 each coordinate S-adenosyl-L-methionine.

Belongs to the class IV-like SAM-binding methyltransferase superfamily. RNA methyltransferase TrmH family. RlmB subfamily.

Its subcellular location is the cytoplasm. It catalyses the reaction guanosine(2251) in 23S rRNA + S-adenosyl-L-methionine = 2'-O-methylguanosine(2251) in 23S rRNA + S-adenosyl-L-homocysteine + H(+). Specifically methylates the ribose of guanosine 2251 in 23S rRNA. The protein is 23S rRNA (guanosine-2'-O-)-methyltransferase RlmB of Coxiella burnetii (strain RSA 493 / Nine Mile phase I).